The following is a 129-amino-acid chain: NADPH-dependent 7-cyano-7-deazaguanine reductase (129 aa).

Cys-42 serves as the catalytic Thioimide intermediate. Catalysis depends on Asp-49, which acts as the Proton donor. Substrate-binding positions include 64-66 (VEL) and 83-84 (HE).

The protein belongs to the GTP cyclohydrolase I family. QueF type 1 subfamily.

The protein resides in the cytoplasm. The enzyme catalyses 7-aminomethyl-7-carbaguanine + 2 NADP(+) = 7-cyano-7-deazaguanine + 2 NADPH + 3 H(+). It functions in the pathway tRNA modification; tRNA-queuosine biosynthesis. Functionally, catalyzes the NADPH-dependent reduction of 7-cyano-7-deazaguanine (preQ0) to 7-aminomethyl-7-deazaguanine (preQ1). In Synechococcus sp. (strain CC9605), this protein is NADPH-dependent 7-cyano-7-deazaguanine reductase.